A 272-amino-acid chain; its full sequence is MIKVVPKVLVMSGYGINCETETAHAFQKAGAETDIVHINDLIAGKKKMADYEIIMFPGGFSYGDDTGSGNAFANKIKNNLFDDLTEFINSGKLILGICNGFQVMTNLGLFALPSTDYGERISALESNTNNRYECRWVHIKENDSVCVFTKGINVTHVPIAHGEGRFYCDEKTYHELKENKQIVFSYCDSEGNPANGEYPLNPNGAYQDIAGICDKTGRIFGLMPHPERSLYSISEPEYQLKKEIAKRNGDIIPEFIENNLQIFKNAVEYFNK.

Positions 8 to 272 (VLVMSGYGIN…FKNAVEYFNK (265 aa)) constitute a Glutamine amidotransferase type-1 domain. Cys-98 (nucleophile) is an active-site residue. Active-site residues include His-225, Glu-227, and Glu-235.

In terms of assembly, part of the FGAM synthase complex composed of 1 PurL, 1 PurQ and 2 PurS subunits.

It is found in the cytoplasm. The enzyme catalyses N(2)-formyl-N(1)-(5-phospho-beta-D-ribosyl)glycinamide + L-glutamine + ATP + H2O = 2-formamido-N(1)-(5-O-phospho-beta-D-ribosyl)acetamidine + L-glutamate + ADP + phosphate + H(+). The catalysed reaction is L-glutamine + H2O = L-glutamate + NH4(+). Its pathway is purine metabolism; IMP biosynthesis via de novo pathway; 5-amino-1-(5-phospho-D-ribosyl)imidazole from N(2)-formyl-N(1)-(5-phospho-D-ribosyl)glycinamide: step 1/2. Its function is as follows. Part of the phosphoribosylformylglycinamidine synthase complex involved in the purines biosynthetic pathway. Catalyzes the ATP-dependent conversion of formylglycinamide ribonucleotide (FGAR) and glutamine to yield formylglycinamidine ribonucleotide (FGAM) and glutamate. The FGAM synthase complex is composed of three subunits. PurQ produces an ammonia molecule by converting glutamine to glutamate. PurL transfers the ammonia molecule to FGAR to form FGAM in an ATP-dependent manner. PurS interacts with PurQ and PurL and is thought to assist in the transfer of the ammonia molecule from PurQ to PurL. The polypeptide is Phosphoribosylformylglycinamidine synthase subunit PurQ (Methanococcus maripaludis (strain DSM 14266 / JCM 13030 / NBRC 101832 / S2 / LL)).